The following is a 402-amino-acid chain: Nodulation protein E (402 aa).

One can recognise a Ketosynthase family 3 (KS3) domain in the interval 2-401 (DRRVVITGIG…GMNAVLAFRQ (400 aa)). Residues Cys-162, His-294, and His-331 each act as for beta-ketoacyl synthase activity in the active site. The helical transmembrane segment at 329–348 (HAHCLGAASALEMIACVMAI) threads the bilayer.

It belongs to the thiolase-like superfamily. Beta-ketoacyl-ACP synthases family.

It localises to the cell inner membrane. Proposed to synthesize NOD factor fatty acyl chain. Involved in the synthesis of a highly unsaturated fatty acid moiety, which forms part of a lipo-oligosaccharide that is responsible for host specificity. The polypeptide is Nodulation protein E (nodE) (Rhizobium sp. (strain N33)).